A 276-amino-acid polypeptide reads, in one-letter code: MLIQFSKMHGLGNDFVVVDGVTQKVFFNAETLKRLGDRHFGIGFDQLLLVEPPYDPDLDFHYRIFNADGSEVQQCGNGARCFARFVRLKGLTNKDRIAVSTVSGRIVLQLEDNDQVTVNMGVPEFEPAKIPFRALKAEKLYLLRVAEQTVMCGVVSMGNPHCVIEVPSVKDAPVETLGPKLESFDRFPERINVGFMEVVSASEINLRVYERGAGETLACGTGACAAVVVGIQQEKLKGRVKVNLPGGSLYISWNGPGSPVYMTGPAEHVFDGQIEL.

Residues Asn-13, Gln-46, and Asn-66 each coordinate substrate. Catalysis depends on Cys-75, which acts as the Proton donor. Substrate-binding positions include Gly-76–Asn-77, Asn-159, Asn-192, and Glu-210–Arg-211. Catalysis depends on Cys-219, which acts as the Proton acceptor. Gly-220–Thr-221 is a substrate binding site.

Belongs to the diaminopimelate epimerase family. In terms of assembly, homodimer.

It is found in the cytoplasm. It carries out the reaction (2S,6S)-2,6-diaminopimelate = meso-2,6-diaminopimelate. It participates in amino-acid biosynthesis; L-lysine biosynthesis via DAP pathway; DL-2,6-diaminopimelate from LL-2,6-diaminopimelate: step 1/1. In terms of biological role, catalyzes the stereoinversion of LL-2,6-diaminopimelate (L,L-DAP) to meso-diaminopimelate (meso-DAP), a precursor of L-lysine and an essential component of the bacterial peptidoglycan. This Tolumonas auensis (strain DSM 9187 / NBRC 110442 / TA 4) protein is Diaminopimelate epimerase.